The following is a 132-amino-acid chain: Small ribosomal subunit protein uS8 (132 aa).

It belongs to the universal ribosomal protein uS8 family. As to quaternary structure, part of the 30S ribosomal subunit. Contacts proteins S5 and S12.

One of the primary rRNA binding proteins, it binds directly to 16S rRNA central domain where it helps coordinate assembly of the platform of the 30S subunit. This is Small ribosomal subunit protein uS8 from Nocardia farcinica (strain IFM 10152).